Reading from the N-terminus, the 309-residue chain is Methionyl-tRNA formyltransferase (309 aa).

Residue 107–110 (SLLP) coordinates (6S)-5,6,7,8-tetrahydrofolate.

It belongs to the Fmt family.

The enzyme catalyses L-methionyl-tRNA(fMet) + (6R)-10-formyltetrahydrofolate = N-formyl-L-methionyl-tRNA(fMet) + (6S)-5,6,7,8-tetrahydrofolate + H(+). Functionally, attaches a formyl group to the free amino group of methionyl-tRNA(fMet). The formyl group appears to play a dual role in the initiator identity of N-formylmethionyl-tRNA by promoting its recognition by IF2 and preventing the misappropriation of this tRNA by the elongation apparatus. The sequence is that of Methionyl-tRNA formyltransferase from Borrelia turicatae (strain 91E135).